The primary structure comprises 320 residues: Ferrochelatase (320 aa).

Fe cation is bound by residues His-194 and Glu-272.

This sequence belongs to the ferrochelatase family.

It is found in the cytoplasm. It catalyses the reaction heme b + 2 H(+) = protoporphyrin IX + Fe(2+). It functions in the pathway porphyrin-containing compound metabolism; protoheme biosynthesis; protoheme from protoporphyrin-IX: step 1/1. Functionally, catalyzes the ferrous insertion into protoporphyrin IX. The sequence is that of Ferrochelatase from Desulfotalea psychrophila (strain LSv54 / DSM 12343).